Reading from the N-terminus, the 219-residue chain is Kappa-scoloptoxin(11)-Ss1a (219 aa).

A signal peptide spans 1–16 (MFYSHLLFFTFTFACS). A propeptide spanning residues 17-25 (SSLNRKTKR) is cleaved from the precursor.

In terms of processing, contains 8 disulfide bonds. In terms of tissue distribution, expressed by the venom gland.

The protein resides in the secreted. Voltage-gated potassium channel inhibitor. In Scolopendra dehaani (Thai centipede), this protein is Kappa-scoloptoxin(11)-Ss1a.